Consider the following 370-residue polypeptide: Aminomethyltransferase (370 aa).

It belongs to the GcvT family. As to quaternary structure, the glycine cleavage system is composed of four proteins: P, T, L and H.

The enzyme catalyses N(6)-[(R)-S(8)-aminomethyldihydrolipoyl]-L-lysyl-[protein] + (6S)-5,6,7,8-tetrahydrofolate = N(6)-[(R)-dihydrolipoyl]-L-lysyl-[protein] + (6R)-5,10-methylene-5,6,7,8-tetrahydrofolate + NH4(+). Functionally, the glycine cleavage system catalyzes the degradation of glycine. The sequence is that of Aminomethyltransferase from Prochlorococcus marinus (strain MIT 9515).